The chain runs to 255 residues: 4-hydroxy-tetrahydrodipicolinate reductase (255 aa).

NAD(+) is bound by residues 9-14 (GFKGKM), 89-91 (GTT), and 115-118 (APNF). His-145 (proton donor/acceptor) is an active-site residue. His-146 contributes to the (S)-2,3,4,5-tetrahydrodipicolinate binding site. The active-site Proton donor is the Lys-149. Residue 155–156 (GT) coordinates (S)-2,3,4,5-tetrahydrodipicolinate.

The protein belongs to the DapB family.

It is found in the cytoplasm. The catalysed reaction is (S)-2,3,4,5-tetrahydrodipicolinate + NAD(+) + H2O = (2S,4S)-4-hydroxy-2,3,4,5-tetrahydrodipicolinate + NADH + H(+). The enzyme catalyses (S)-2,3,4,5-tetrahydrodipicolinate + NADP(+) + H2O = (2S,4S)-4-hydroxy-2,3,4,5-tetrahydrodipicolinate + NADPH + H(+). It functions in the pathway amino-acid biosynthesis; L-lysine biosynthesis via DAP pathway; (S)-tetrahydrodipicolinate from L-aspartate: step 4/4. Functionally, catalyzes the conversion of 4-hydroxy-tetrahydrodipicolinate (HTPA) to tetrahydrodipicolinate. This is 4-hydroxy-tetrahydrodipicolinate reductase from Streptococcus gordonii (strain Challis / ATCC 35105 / BCRC 15272 / CH1 / DL1 / V288).